Here is a 550-residue protein sequence, read N- to C-terminus: Hydroxylamine reductase (550 aa).

Cys3, Cys6, Cys18, and Cys25 together coordinate [2Fe-2S] cluster. Hybrid [4Fe-2O-2S] cluster contacts are provided by His249, Glu273, Cys317, Cys405, Cys433, Cys458, Glu492, and Lys494. A Cysteine persulfide modification is found at Cys405.

The protein belongs to the HCP family. [2Fe-2S] cluster is required as a cofactor. Requires hybrid [4Fe-2O-2S] cluster as cofactor.

Its subcellular location is the cytoplasm. It catalyses the reaction A + NH4(+) + H2O = hydroxylamine + AH2 + H(+). Catalyzes the reduction of hydroxylamine to form NH(3) and H(2)O. The sequence is that of Hydroxylamine reductase from Escherichia coli O7:K1 (strain IAI39 / ExPEC).